The chain runs to 254 residues: Ribosomal RNA small subunit methyltransferase G (254 aa).

S-adenosyl-L-methionine is bound by residues G92, A143–E144, and R156.

This sequence belongs to the methyltransferase superfamily. RNA methyltransferase RsmG family.

It is found in the cytoplasm. Specifically methylates the N7 position of a guanine in 16S rRNA. This is Ribosomal RNA small subunit methyltransferase G from Leptospira interrogans serogroup Icterohaemorrhagiae serovar copenhageni (strain Fiocruz L1-130).